We begin with the raw amino-acid sequence, 511 residues long: Colicin-B (511 aa).

Positions 17–24 match the TonB box motif; sequence DTMVVWPS. Helical transmembrane passes span 455–475 and 477–497; these read MASAVALSLFSLTLGSALIAF and LSATVVGFVGVVIAGAIGAFI.

It belongs to the channel forming colicin family.

It is found in the cell membrane. Functionally, this colicin is a channel-forming colicin. This class of transmembrane toxins depolarize the cytoplasmic membrane, leading to dissipation of cellular energy. Colicins are polypeptide toxins produced by and active against E.coli and closely related bacteria. This Escherichia coli protein is Colicin-B (cba).